Here is a 176-residue protein sequence, read N- to C-terminus: Ribosome maturation factor RimM (176 aa).

The PRC barrel domain occupies 99–173; the sequence is ADEYYWHDLL…TMTITPLEGL (75 aa).

This sequence belongs to the RimM family. As to quaternary structure, binds ribosomal protein uS19.

The protein resides in the cytoplasm. In terms of biological role, an accessory protein needed during the final step in the assembly of 30S ribosomal subunit, possibly for assembly of the head region. Essential for efficient processing of 16S rRNA. May be needed both before and after RbfA during the maturation of 16S rRNA. It has affinity for free ribosomal 30S subunits but not for 70S ribosomes. In Trichlorobacter lovleyi (strain ATCC BAA-1151 / DSM 17278 / SZ) (Geobacter lovleyi), this protein is Ribosome maturation factor RimM.